A 331-amino-acid polypeptide reads, in one-letter code: ABSCISIC ACID-INSENSITIVE 5-like protein 1 (331 aa).

Serine 40 and serine 98 each carry phosphoserine. The residue at position 143 (threonine 143) is a Phosphothreonine. The bZIP domain maps to 247 to 310 (MERRQRRMIK…RQEIISRSKQ (64 aa)). A basic motif region spans residues 249–268 (RRQRRMIKNRESAARSRARR). Residues 275–289 (LELELNNLTEENTKL) form a leucine-zipper region. Residues 296–320 (NEKKRRQEIISRSKQVTKEKSGDKL) show a composition bias toward basic and acidic residues. The disordered stretch occupies residues 296–331 (NEKKRRQEIISRSKQVTKEKSGDKLRKIRRMASAGW).

The protein belongs to the bZIP family. ABI5 subfamily. In terms of assembly, DNA-binding heterodimer with AREB3/DPBF3 or EEL/DPBF4. Interacts with the AFP proteins AFP1, AFP2 and AFP3. Predominantly expressed in seeds.

It localises to the nucleus. Could participate in abscisic acid-regulated gene expression during seed development. The polypeptide is ABSCISIC ACID-INSENSITIVE 5-like protein 1 (DPBF2) (Arabidopsis thaliana (Mouse-ear cress)).